Consider the following 357-residue polypeptide: Thiamine thiazole synthase 3, chloroplastic (357 aa).

The N-terminal 51 residues, 1–51, are a transit peptide targeting the chloroplast; it reads MSISAAGVATGLGANVELKSNVGSSSSSVAGVRLFTSRKAQLRRCAAPATS. Substrate contacts are provided by residues Ala103, 123-124, Gly131, and Ala196; that span reads EQ. The residue at position 225 (Cys225) is a 2,3-didehydroalanine (Cys). Residues Asp227, His242, Met294, and 304 to 306 each bind substrate; that span reads RMG.

The protein belongs to the THI4 family. As to quaternary structure, homooctamer. Fe cation serves as cofactor. During the catalytic reaction, a sulfide is transferred from Cys-225 to a reaction intermediate, generating a dehydroalanine residue.

The protein resides in the plastid. Its subcellular location is the chloroplast. It catalyses the reaction [ADP-thiazole synthase]-L-cysteine + glycine + NAD(+) = [ADP-thiazole synthase]-dehydroalanine + ADP-5-ethyl-4-methylthiazole-2-carboxylate + nicotinamide + 3 H2O + 2 H(+). Its function is as follows. Involved in biosynthesis of the thiamine precursor thiazole. Catalyzes the conversion of NAD and glycine to adenosine diphosphate 5-(2-hydroxyethyl)-4-methylthiazole-2-carboxylic acid (ADT), an adenylated thiazole intermediate. The reaction includes an iron-dependent sulfide transfer from a conserved cysteine residue of the protein to a thiazole intermediate. The enzyme can only undergo a single turnover, which suggests it is a suicide enzyme. May have additional roles in adaptation to various stress conditions and in DNA damage tolerance. The chain is Thiamine thiazole synthase 3, chloroplastic from Physcomitrium patens (Spreading-leaved earth moss).